The primary structure comprises 456 residues: Cysteine--tRNA ligase (456 aa).

C28 provides a ligand contact to Zn(2+). The 'HIGH' region signature appears at 30–40; the sequence is ITVYDHCHLGH. The Zn(2+) site is built by C209, H234, and E238. A 'KMSKS' region motif is present at residues 266–270; it reads KMAKS. K269 is a binding site for ATP.

The protein belongs to the class-I aminoacyl-tRNA synthetase family. Monomer. It depends on Zn(2+) as a cofactor.

It is found in the cytoplasm. It catalyses the reaction tRNA(Cys) + L-cysteine + ATP = L-cysteinyl-tRNA(Cys) + AMP + diphosphate. The sequence is that of Cysteine--tRNA ligase from Legionella pneumophila (strain Paris).